We begin with the raw amino-acid sequence, 431 residues long: Histidine--tRNA ligase (431 aa).

The protein belongs to the class-II aminoacyl-tRNA synthetase family. As to quaternary structure, homodimer.

Its subcellular location is the cytoplasm. The catalysed reaction is tRNA(His) + L-histidine + ATP = L-histidyl-tRNA(His) + AMP + diphosphate + H(+). This chain is Histidine--tRNA ligase, found in Levilactobacillus brevis (strain ATCC 367 / BCRC 12310 / CIP 105137 / JCM 1170 / LMG 11437 / NCIMB 947 / NCTC 947) (Lactobacillus brevis).